We begin with the raw amino-acid sequence, 356 residues long: Protein pelota homolog (356 aa).

It belongs to the eukaryotic release factor 1 family. Pelota subfamily. In terms of assembly, monomer. Requires a divalent metal cation as cofactor.

It localises to the cytoplasm. May function in recognizing stalled ribosomes, interact with stem-loop structures in stalled mRNA molecules, and effect endonucleolytic cleavage of the mRNA. May play a role in the release non-functional ribosomes and degradation of damaged mRNAs. Has endoribonuclease activity. The sequence is that of Protein pelota homolog from Aeropyrum pernix (strain ATCC 700893 / DSM 11879 / JCM 9820 / NBRC 100138 / K1).